The sequence spans 599 residues: DNA-directed RNA polymerase III subunit RPC3 (599 aa).

A disordered region spans residues 335 to 371; that stretch reads PRLDGLRPRGKGSRSVSPRPQSKRVKTEEGYTKTGDY. Basic and acidic residues predominate over residues 359-371; that stretch reads VKTEEGYTKTGDY. A leucine-zipper region spans residues 526–547; that stretch reads IYKSLSRCFERVAAERAKLPIL.

This sequence belongs to the RNA polymerase beta chain family. As to quaternary structure, component of the RNA polymerase III (Pol III) complex consisting of 17 subunits.

The protein resides in the nucleus. Its function is as follows. DNA-dependent RNA polymerase catalyzes the transcription of DNA into RNA using the four ribonucleoside triphosphates as substrates. Specific core component of RNA polymerase III which synthesizes small RNAs, such as 5S rRNA and tRNAs. This chain is DNA-directed RNA polymerase III subunit RPC3 (RPC82), found in Yarrowia lipolytica (strain CLIB 122 / E 150) (Yeast).